A 358-amino-acid polypeptide reads, in one-letter code: Peptide chain release factor 1 (358 aa).

Glutamine 234 is subject to N5-methylglutamine. The segment at 283 to 306 (ERLHSERAGQRKSMVGSGDRSERI) is disordered.

This sequence belongs to the prokaryotic/mitochondrial release factor family. Post-translationally, methylated by PrmC. Methylation increases the termination efficiency of RF1.

The protein localises to the cytoplasm. Its function is as follows. Peptide chain release factor 1 directs the termination of translation in response to the peptide chain termination codons UAG and UAA. This Zymomonas mobilis subsp. mobilis (strain ATCC 31821 / ZM4 / CP4) protein is Peptide chain release factor 1.